We begin with the raw amino-acid sequence, 604 residues long: Putative O-acetyltransferase SACOL0978 (604 aa).

11 helical membrane-spanning segments follow: residues 15–35, 43–63, 85–105, 150–170, 176–196, 212–232, 240–260, 267–287, 310–330, 332–352, and 377–397; these read YIPGLDGLRAIAVLGIIIYHL, GFLGVDTFFVISGYLITSLLL, LLPAVIVLLMVVGTATLLLKS, AIEEQFYIFFPVILVTLLLTI, IGFIFWGVSIISLGLMMFIYS, LQTLLLGVILAFLWPPFKLKN, YVIDSIGSLSFIVLILLFFII, IYDGGFYLISILTLFIIASVV, YSLYLWHFAVISFVHSYYVDG, IPVYVYFIDISLTIIFAELSY, and FIRMAIVVTLLIPFMLILVGA. Catalysis depends on residues Ser-459, Asp-581, and His-584.

It belongs to the acyltransferase 3 family.

The protein localises to the cell membrane. This chain is Putative O-acetyltransferase SACOL0978, found in Staphylococcus aureus (strain COL).